The chain runs to 65 residues: Large ribosomal subunit protein bL35 (65 aa).

Belongs to the bacterial ribosomal protein bL35 family.

The chain is Large ribosomal subunit protein bL35 from Prochlorococcus marinus (strain MIT 9215).